A 743-amino-acid polypeptide reads, in one-letter code: Dolichyl-phosphate-mannose--protein mannosyltransferase 5 (743 aa).

At 1-46 (MNKEHLLKVDPIPDVTIKRGPLRSFLITKPCDNLSSLRTVTSSKEK) the chain is on the lumenal side. N-linked (GlcNAc...) asparagine glycosylation is present at N33. The helical transmembrane segment at 47-67 (LLVGCLLIFTAIVRLHNISLP) threads the bilayer. Topologically, residues 68–129 (NSVVFGENEV…IGTEYTANVP (62 aa)) are cytoplasmic. Residues 130-150 (YVAMRFFSATLGIVSVLVLYL) form a helical membrane-spanning segment. Topologically, residues 151 to 158 (TLRVSGVK) are lumenal. Residues 159-179 (IAVAAICAVCFAIENSFVTLS) form a helical membrane-spanning segment. A topological domain (cytoplasmic) is located at residue R180. A helical membrane pass occupies residues 181 to 201 (FTLIEGPFVFFMACAVYFFRR). Residues 202-231 (SELYLPNSCKANKSLLAASIALGFAVSSKW) lie on the Lumenal side of the membrane. The N-linked (GlcNAc...) asparagine glycan is linked to N213. A helical transmembrane segment spans residues 232-252 (AGLFTIAWAGIIVLWRVWFMI). The Cytoplasmic segment spans residues 253-264 (GDLSRPIGSSIK). Residues 265–285 (YMAFQFTCLLAIPAFIYFLIF) traverse the membrane as a helical segment. Residues 286–583 (SVHIKTLNVN…GREVYFLGNA (298 aa)) are Lumenal-facing. The region spanning 320 to 374 (VAEVAVGSAVSLNHVGTAGGYLHSHLHNYPAGSMQQQVTLYPHIDQNNKWIIELA) is the MIR 1 domain. 2 N-linked (GlcNAc...) asparagine glycosylation sites follow: N380 and N386. 2 MIR domains span residues 384-444 (FQNL…IEID) and 454-510 (QEHI…IEEN). A helical membrane pass occupies residues 584–604 (VLWWSVTAFICTFIIGVAVEL). The Cytoplasmic portion of the chain corresponds to 605–623 (LAWKLGVNILRDKHIINFH). A helical transmembrane segment spans residues 624–644 (YQVFQYLLGFAAHYFPYFFVG). Topologically, residues 645 to 646 (QK) are lumenal. The chain crosses the membrane as a helical span at residues 647–667 (LFLYDYLPAYYFGILAFGHAL). The Cytoplasmic segment spans residues 668 to 683 (DLISTYISNKRNNTGY). A helical membrane pass occupies residues 684–704 (IVVAIFMVVCFYFFSEHSPLI). At 705–743 (YATGWSSNLCKRSKWLGSWDFYCNSLLLSDSHYELNAES) the chain is on the lumenal side.

Belongs to the glycosyltransferase 39 family. In terms of assembly, PMT3 and PMT5 form a functional heterodimer. Also forms a minor complex with PMT2.

It localises to the endoplasmic reticulum membrane. The enzyme catalyses a di-trans,poly-cis-dolichyl beta-D-mannosyl phosphate + L-seryl-[protein] = 3-O-(alpha-D-mannosyl)-L-seryl-[protein] + a di-trans,poly-cis-dolichyl phosphate + H(+). It catalyses the reaction a di-trans,poly-cis-dolichyl beta-D-mannosyl phosphate + L-threonyl-[protein] = 3-O-(alpha-D-mannosyl)-L-threonyl-[protein] + a di-trans,poly-cis-dolichyl phosphate + H(+). It functions in the pathway protein modification; protein glycosylation. Functionally, protein O-mannosyltransferase involved in O-glycosylation which is essential for cell wall rigidity. Forms a heterodimeric complex with PMT3 and more rarely with PMT2 to transfer mannose from Dol-P-mannose to Ser or Thr residues on proteins. The sequence is that of Dolichyl-phosphate-mannose--protein mannosyltransferase 5 from Saccharomyces cerevisiae (strain ATCC 204508 / S288c) (Baker's yeast).